The chain runs to 182 residues: Mid1-interacting protein 1 (182 aa).

Met-1 is modified (N-acetylmethionine). The segment at 55 to 75 (VGGSGGCLEERTTPAPSPGSA) is disordered. Phosphoserine is present on residues Ser-71, Ser-74, and Ser-78.

Belongs to the SPOT14 family. In terms of assembly, homodimer in the absence of THRSP. Heterodimer with THRSP. The homodimer interacts with ACACA and ACACB. Promotes polymerization of Acetyl-CoA carboxylase to form complexes that contain MID1IP1 and ACACA and/or ACACB. Interaction with THRSP interferes with ACACA binding. During embryonic development, expressed mainly in the neuroepithelial midline, urogenital apparatus and digits. Detected in adult white fat, liver, heart, brain and kidney. Expressed at very low levels in lactating mammary gland.

It is found in the nucleus. The protein localises to the cytoplasm. The protein resides in the cytoskeleton. Plays a role in the regulation of lipogenesis in liver. Up-regulates ACACA enzyme activity. Required for efficient lipid biosynthesis, including triacylglycerol, diacylglycerol and phospholipid. Involved in stabilization of microtubules. The sequence is that of Mid1-interacting protein 1 (Mid1ip1) from Mus musculus (Mouse).